Reading from the N-terminus, the 473-residue chain is ATP synthase subunit beta, chloroplastic (473 aa).

172 to 179 serves as a coordination point for ATP; the sequence is GGAGVGKT.

This sequence belongs to the ATPase alpha/beta chains family. In terms of assembly, F-type ATPases have 2 components, CF(1) - the catalytic core - and CF(0) - the membrane proton channel. CF(1) has five subunits: alpha(3), beta(3), gamma(1), delta(1), epsilon(1). CF(0) has four main subunits: a(1), b(1), b'(1) and c(9-12).

It localises to the plastid. The protein resides in the chloroplast thylakoid membrane. It carries out the reaction ATP + H2O + 4 H(+)(in) = ADP + phosphate + 5 H(+)(out). Functionally, produces ATP from ADP in the presence of a proton gradient across the membrane. The catalytic sites are hosted primarily by the beta subunits. The sequence is that of ATP synthase subunit beta, chloroplastic from Pteridium esculentum (Bracken fern).